Consider the following 688-residue polypeptide: MTARKIFVTTALPYANGNFHIGHIMEYIQADTWVRAQRMQGNAVNFVGADDAHGAPIMIAAEKAGKTPQQFVADIAAGRKQYLDGFHIAFDNWSNTDSPENHELSQQIYLDLKAAGFIETRTIEQFFDPEKNMFLPDRFIKGECPRCHAKDQYGDNCEVCSSVYAPTDLINPYSALSGAKPVLKTSEHFFFKLSDPRAVEFLTEWTQNGQHVQPEVAAKIKEWFGTRTNPDGTTSEGLDDWDISRDAPYFGIEIPDAPGKYFYVWLDAPVGYLASLKNLLNKRGEDYDAYMADPQLEQYHFIGKDIITFHTLFWPAMLKFSGRKTPTKICVHGFMTVNNGEKMSKSRGTGLDPLKYLALGMNPEWLRYYLGAKLNGKNEDIDFNPEDFMARVNSDLIGKYVNIASRAAGFIFKRFGGKLGEVSADGQALLAQLREQAGPIVAAYEARDTARAVRETMLLCDRVNSYVDANKPWELAKQEGMEARLQDVCTTCIEAFRILTIYLKPILPQVAAEVARFLIVPPEQFAEVAQPLGAGHQIGQYQHLMQRVTQEQLDALFEPPAPAVEKVIPGGEEIAPTITIDDFAKVDLRIAKIVKCEAVEGSTKLLRLTLDAGEGQTRNVFSGIASMYKPEDLQGKLTVMVANLAPRKMKFGLSEGMVLAASHADEKAHPGIFVLEPFPGAQPGMRIH.

Positions 13-23 (PYANGNFHIGH) match the 'HIGH' region motif. Cysteine 144, cysteine 147, cysteine 157, and cysteine 160 together coordinate Zn(2+). The 'KMSKS' region motif lies at 342-346 (KMSKS). Lysine 345 is a binding site for ATP. Residues 582–688 (DFAKVDLRIA…PGAQPGMRIH (107 aa)) enclose the tRNA-binding domain.

Belongs to the class-I aminoacyl-tRNA synthetase family. MetG type 1 subfamily. In terms of assembly, homodimer. It depends on Zn(2+) as a cofactor.

Its subcellular location is the cytoplasm. The catalysed reaction is tRNA(Met) + L-methionine + ATP = L-methionyl-tRNA(Met) + AMP + diphosphate. Is required not only for elongation of protein synthesis but also for the initiation of all mRNA translation through initiator tRNA(fMet) aminoacylation. This is Methionine--tRNA ligase from Acidovorax ebreus (strain TPSY) (Diaphorobacter sp. (strain TPSY)).